Here is a 308-residue protein sequence, read N- to C-terminus: Putative integrase/recombinase y4qK (308 aa).

The 83-residue stretch at Leu15–Leu97 folds into the Core-binding (CB) domain. The 174-residue stretch at Lys115–Ser288 folds into the Tyr recombinase domain. Active-site residues include Arg150, Lys175, His240, Arg243, and His266. The O-(3'-phospho-DNA)-tyrosine intermediate role is filled by Tyr275.

It belongs to the 'phage' integrase family.

Its function is as follows. May function as an integrase. This Sinorhizobium fredii (strain NBRC 101917 / NGR234) protein is Putative integrase/recombinase y4qK.